Here is a 370-residue protein sequence, read N- to C-terminus: Aspartate-semialdehyde dehydrogenase (370 aa).

NADP(+) is bound by residues 10–13, 37–38, and glutamine 73; these read RGMV and TS. Residue arginine 102 coordinates phosphate. Residue cysteine 135 is the Acyl-thioester intermediate of the active site. Residue glutamine 162 coordinates substrate. NADP(+) contacts are provided by residues 165–166 and proline 193; that span reads SG. Substrate is bound at residue glutamate 241. Lysine 244 contacts phosphate. Arginine 268 contributes to the substrate binding site. The Proton acceptor role is filled by histidine 275. Glutamine 351 is an NADP(+) binding site.

It belongs to the aspartate-semialdehyde dehydrogenase family. Homodimer.

The catalysed reaction is L-aspartate 4-semialdehyde + phosphate + NADP(+) = 4-phospho-L-aspartate + NADPH + H(+). It functions in the pathway amino-acid biosynthesis; L-lysine biosynthesis via DAP pathway; (S)-tetrahydrodipicolinate from L-aspartate: step 2/4. It participates in amino-acid biosynthesis; L-methionine biosynthesis via de novo pathway; L-homoserine from L-aspartate: step 2/3. Its pathway is amino-acid biosynthesis; L-threonine biosynthesis; L-threonine from L-aspartate: step 2/5. Functionally, catalyzes the NADPH-dependent formation of L-aspartate-semialdehyde (L-ASA) by the reductive dephosphorylation of L-aspartyl-4-phosphate. The protein is Aspartate-semialdehyde dehydrogenase (asd) of Pseudomonas aeruginosa (strain ATCC 15692 / DSM 22644 / CIP 104116 / JCM 14847 / LMG 12228 / 1C / PRS 101 / PAO1).